The chain runs to 726 residues: Procollagen-lysine,2-oxoglutarate 5-dioxygenase 1 (726 aa).

An N-terminal signal peptide occupies residues 1 to 18 (MRLLLLLAPLGWLLLAET). Residues asparagine 196 and asparagine 537 are each glycosylated (N-linked (GlcNAc...) asparagine). The region spanning 635-726 (QFDLAFVVRY…RYIAVSFVDP (92 aa)) is the Fe2OG dioxygenase domain. 2 residues coordinate Fe cation: histidine 655 and aspartate 657. An N-linked (GlcNAc...) asparagine glycan is attached at asparagine 685. Histidine 707 lines the Fe cation pocket. The active site involves arginine 717.

Homodimer. Identified in a complex with P3H3 and P3H4. Fe(2+) serves as cofactor. Requires L-ascorbate as cofactor.

The protein resides in the rough endoplasmic reticulum membrane. It catalyses the reaction L-lysyl-[collagen] + 2-oxoglutarate + O2 = (5R)-5-hydroxy-L-lysyl-[collagen] + succinate + CO2. In terms of biological role, part of a complex composed of PLOD1, P3H3 and P3H4 that catalyzes hydroxylation of lysine residues in collagen alpha chains and is required for normal assembly and cross-linkling of collagen fibrils. Forms hydroxylysine residues in -Xaa-Lys-Gly- sequences in collagens. These hydroxylysines serve as sites of attachment for carbohydrate units and are essential for the stability of the intermolecular collagen cross-links. The sequence is that of Procollagen-lysine,2-oxoglutarate 5-dioxygenase 1 (PLOD1) from Bos taurus (Bovine).